A 290-amino-acid polypeptide reads, in one-letter code: Glycine--tRNA ligase alpha subunit (290 aa).

It belongs to the class-II aminoacyl-tRNA synthetase family. Tetramer of two alpha and two beta subunits.

Its subcellular location is the cytoplasm. It carries out the reaction tRNA(Gly) + glycine + ATP = glycyl-tRNA(Gly) + AMP + diphosphate. In Synechococcus sp. (strain CC9902), this protein is Glycine--tRNA ligase alpha subunit.